We begin with the raw amino-acid sequence, 559 residues long: MSQSTMIHHSEAWQALTQHADGMRNVHLKSLFAEAPGHHARFTRRGAGLTLDLSKHRWRDETLTKLLALAREANLERAIERLQNGERVNLSEDRPALHTALRLPPEASLVVEGEDVVPDVHETLARMQAMVEKCHAGQWRGATGKAITDVVNLGVGGSDLGPLMVTHALADYRPRDVHQVDIHFASTMDGSQLADYLTRFNPATTLFVLSSKSFTTIDTLSNASTARDWLMTRLADGGRDAGMREVVMRQHFIGVSAKPERMSEWGIDPRHQLRFWEWVGGRYSLWGAIGLPIALAVGMENFRELLAGAHEMDRHFRDTPLEDNLPVLLALAGIWNVNFLDVRAHSILPYDGRLEYFASYLEQLEMESNGKSVTNDGEITPYSTCPVLWGQLGPNAQHAFYQLLHQGTQAVECDFIAPVRRYDRVEDPATRAHLKAQHRLTLANCIAQSRVLMLGDEALPSDAPRPSHKRYRGNQPSTTLLLDRLTPRTLGALIALYEHKVFVQATIWDINPFDQWGVELGKQIASETEQILASRRGAETLDDSSRGLLDVVWQAQDAT.

E367 serves as the catalytic Proton donor. Residues H398 and K522 contribute to the active site.

This sequence belongs to the GPI family.

The protein resides in the cytoplasm. It carries out the reaction alpha-D-glucose 6-phosphate = beta-D-fructose 6-phosphate. It participates in carbohydrate biosynthesis; gluconeogenesis. The protein operates within carbohydrate degradation; glycolysis; D-glyceraldehyde 3-phosphate and glycerone phosphate from D-glucose: step 2/4. Functionally, catalyzes the reversible isomerization of glucose-6-phosphate to fructose-6-phosphate. This Chromohalobacter salexigens (strain ATCC BAA-138 / DSM 3043 / CIP 106854 / NCIMB 13768 / 1H11) protein is Glucose-6-phosphate isomerase 2.